Here is a 117-residue protein sequence, read N- to C-terminus: Holo-[acyl-carrier-protein] synthase (117 aa).

Mg(2+)-binding residues include Asp-6 and Glu-55.

Belongs to the P-Pant transferase superfamily. AcpS family. It depends on Mg(2+) as a cofactor.

The protein resides in the cytoplasm. The enzyme catalyses apo-[ACP] + CoA = holo-[ACP] + adenosine 3',5'-bisphosphate + H(+). Its function is as follows. Transfers the 4'-phosphopantetheine moiety from coenzyme A to a Ser of acyl-carrier-protein. In Chlorobaculum parvum (strain DSM 263 / NCIMB 8327) (Chlorobium vibrioforme subsp. thiosulfatophilum), this protein is Holo-[acyl-carrier-protein] synthase.